A 489-amino-acid chain; its full sequence is Transcription factor TGAL11 (489 aa).

Residues 87–99 (AATATATARPPAT) are compositionally biased toward low complexity. The disordered stretch occupies residues 87–181 (AATATATARP…SDHRMTKTLD (95 aa)). The span at 121–139 (SNVTADTTDSESSSKNNGD) shows a compositional bias: polar residues. Residues 148-159 (ASQFDQIPQQQQ) show a composition bias toward low complexity. The span at 171–181 (HSDHRMTKTLD) shows a compositional bias: basic and acidic residues. Positions 181–225 (DPKIMRRLAQNREAARKSRLRKKAYIQQLESSKLRLAQMEQDLER) constitute a bZIP domain. Residues 183–203 (KIMRRLAQNREAARKSRLRKK) form a basic motif region. A leucine-zipper region spans residues 209–223 (LESSKLRLAQMEQDL). The 216-residue stretch at 245–460 (AAMFDAEYGR…RALSSLWASR (216 aa)) folds into the DOG1 domain.

This sequence belongs to the bZIP family.

The protein localises to the nucleus. Its function is as follows. Transcriptional regulator involved in defense response. The chain is Transcription factor TGAL11 from Oryza sativa subsp. japonica (Rice).